We begin with the raw amino-acid sequence, 240 residues long: Protein UL20 homolog (240 aa).

Helical transmembrane passes span 76-96, 104-124, 147-167, and 203-225; these read VFYI…FFFY, LLFT…IIML, GIIV…TLFI, and VLLV…SFIG.

Belongs to the alphaherpesvirinae UL20 family. As to quaternary structure, interacts with gK (via N-terminus); this interaction plays a role in the coordinate transport of UL20 and gK to the trans-Golgi network (TGN), and is required for their cell surface expression. Interacts with gB. Interacts with host STING1; this interaction inhibits host interferon-beta promoter activation.

It is found in the virion. Its subcellular location is the host cell membrane. The protein resides in the host endosome membrane. It localises to the host Golgi apparatus membrane. The protein localises to the host nucleus membrane. Its function is as follows. Plays an essential role in egress of virus particles from the nucleus, cytoplasmic envelopment and virus-induced cell fusion. Forms a functional protein complex with gK and this interaction is absolutely essential for their coordinate intracellular transport, gK glycosylation, expression on host cell surface, and function. Together, they modulate gB-mediated virus-induced cell fusion and virion egress and therefore actively participate in these processes. In addition, plays a role in inhibiting the type I interferon responses by suppressing STING1-mediated activation of the IFN-beta promoter. The protein is Protein UL20 homolog (39) of Homo sapiens (Human).